Reading from the N-terminus, the 478-residue chain is Pyruvate kinase (478 aa).

Arginine 35 serves as a coordination point for substrate. The K(+) site is built by asparagine 37, serine 39, and aspartate 69. 37-40 provides a ligand contact to ATP; that stretch reads NMSH. ATP-binding residues include arginine 76 and lysine 157. Residue glutamate 219 participates in Mg(2+) binding. Positions 242, 243, and 275 each coordinate substrate. Mg(2+) is bound at residue aspartate 243.

Belongs to the pyruvate kinase family. As to quaternary structure, homotetramer. Requires Mg(2+) as cofactor. K(+) serves as cofactor.

It carries out the reaction pyruvate + ATP = phosphoenolpyruvate + ADP + H(+). It functions in the pathway carbohydrate degradation; glycolysis; pyruvate from D-glyceraldehyde 3-phosphate: step 5/5. This is Pyruvate kinase (pyk) from Methylorubrum extorquens (strain ATCC 14718 / DSM 1338 / JCM 2805 / NCIMB 9133 / AM1) (Methylobacterium extorquens).